We begin with the raw amino-acid sequence, 367 residues long: Leucine dehydrogenase (367 aa).

K80 is an active-site residue. 180-186 (GVGNVAY) lines the NAD(+) pocket.

It belongs to the Glu/Leu/Phe/Val dehydrogenases family. As to quaternary structure, homohexamer.

The catalysed reaction is L-leucine + NAD(+) + H2O = 4-methyl-2-oxopentanoate + NH4(+) + NADH + H(+). Its pathway is amino-acid degradation; L-leucine degradation; 4-methyl-2-oxopentanoate from L-leucine (dehydrogenase route): step 1/1. Its function is as follows. Catalyzes the reversible deamination of L-leucine to 4-methyl-2-oxopentanoate. The polypeptide is Leucine dehydrogenase (ldh) (Geobacillus stearothermophilus (Bacillus stearothermophilus)).